A 445-amino-acid polypeptide reads, in one-letter code: MAAPTPARPVLTHLLVALFGMGSWAAVNGIWVELPVVVKELPEGWSLPSYVSVLVALGNLGLLVVTLWRRLAPGKDEQVPIRVVQVLGMVGTALLASLWHHVAPVAGQLHSVAFLALAFVLALACCASNVTFLPFLSHLPPRFLRSFFLGQGLSALLPCVLALVQGVGRLECPPAPINGTPGPPLDFLERFPASTFFWALTALLVASAAAFQGLLLLLPPPPSVPTGELGSGLQVGAPGAEEEVEESSPLQEPPSQAAGTTPGPDPKAYQLLSARSACLLGLLAATNALTNGVLPAVQSFSCLPYGRLAYHLAVVLGSAANPLACFLAMGVLCRSLAGLGGLSLLGVFCGGYLMALAVLSPCPPLVGTSAGVVLVVLSWVLCLGVFSYVKVAASSLLHGGGRPALLAAGVAIQVGSLLGAVAMFPPTSIYHVFHSRKDCADPCDS.

The next 6 membrane-spanning stretches (helical) occupy residues 14–34 (LLVA…WVEL), 47–67 (LPSY…VVTL), 86–106 (VLGM…APVA), 112–132 (VAFL…NVTF), 147–167 (FFLG…VQGV), and 196–216 (FFWA…GLLL). The tract at residues 228-264 (ELGSGLQVGAPGAEEEVEESSPLQEPPSQAAGTTPGP) is disordered. A compositionally biased stretch (low complexity) spans 247–258 (SSPLQEPPSQAA). Transmembrane regions (helical) follow at residues 277 to 297 (ACLL…LPAV), 312 to 332 (LAVV…MGVL), 339 to 359 (LGGL…LAVL), 366 to 386 (VGTS…LGVF), and 404 to 424 (ALLA…VAMF).

It belongs to the riboflavin transporter family. In terms of tissue distribution, highly expressed in brain, fetal brain and salivary gland. Weakly expressed in other tissues.

The protein resides in the cell membrane. It carries out the reaction riboflavin(in) = riboflavin(out). Riboflavin transport is Na(+)-independent but moderately pH-sensitive. Activity is strongly inhibited by riboflavin analogs, such as lumiflavin. Weakly inhibited by flavin adenine dinucleotide (FAD) and flavin mononucleotide (FMN). Functionally, plasma membrane transporter mediating the uptake by cells of the water soluble vitamin B2/riboflavin that plays a key role in biochemical oxidation-reduction reactions of the carbohydrate, lipid, and amino acid metabolism. Humans are unable to synthesize vitamin B2/riboflavin and must obtain it via intestinal absorption. May also act as a receptor for 4-hydroxybutyrate. In terms of biological role, (Microbial infection) In case of infection by retroviruses, acts as a cell receptor to retroviral envelopes similar to the porcine endogenous retrovirus (PERV-A). The protein is Solute carrier family 52, riboflavin transporter, member 2 (SLC52A2) of Homo sapiens (Human).